Reading from the N-terminus, the 75-residue chain is Rugosin-LK1 (75 aa).

The first 22 residues, 1–22, serve as a signal peptide directing secretion; it reads MFTMKKSLLFLFFLGTISLSFC. Residues 23–40 constitute a propeptide that is removed on maturation; that stretch reads EEERSADEDDEGEMTEEE.

As to expression, expressed by the skin glands.

Its subcellular location is the secreted. In terms of biological role, has antimicrobial activity against Gram-positive bacteria S.aureus ATCC 2592 (MIC=10.0 uM), S.aureus ATCC 43300 (MIC=15.0 uM) and B.subtilis (MIC=40.0 uM), against Gram-negative bacteria E.coli ML-35P (MIC=10.0 uM), P.aeruginosa PA01 (MIC=5.0 uM) and P.aeruginosa ATCC 27853 (MIC=5.0 uM) and against fungus C.albicans ATCC 2002 (MIC=10.0 uM). The protein is Rugosin-LK1 of Limnonectes kuhlii (Kuhl's Creek frog).